The following is a 318-amino-acid chain: Pyrimidine-specific ribonucleoside hydrolase RihA (318 aa).

His240 is an active-site residue.

The protein belongs to the IUNH family. RihA subfamily.

Functionally, hydrolyzes cytidine or uridine to ribose and cytosine or uracil, respectively. This Shewanella oneidensis (strain ATCC 700550 / JCM 31522 / CIP 106686 / LMG 19005 / NCIMB 14063 / MR-1) protein is Pyrimidine-specific ribonucleoside hydrolase RihA.